A 1512-amino-acid polypeptide reads, in one-letter code: Sterol 3-beta-glucosyltransferase (1512 aa).

Disordered regions lie at residues 22-50 and 150-222; these read FSGS…YHSL and DEHT…DTDV. Positions 156–169 are enriched in acidic residues; the sequence is SEEEDSADKEEESI. Residues 190–222 are compositionally biased toward low complexity; sequence TTATLITTQITRTKTATTATPTPTPTSSVDTDV. Residues 296–331 form the GRAM 1 domain; sequence LQRVFDLSDEDTFCGNYSAWLIKDVLLQGHVYLTKD. Positions 359–520 constitute a PH domain; the sequence is SIVYSGNLGL…WCNNITKLIF (162 aa). One can recognise a GRAM 2 domain in the interval 816 to 880; the sequence is RNFQSHFSTN…TDIEEVRASR (65 aa). UDP-alpha-D-glucose-binding residues include S1024, R1025, D1027, N1299, I1328, H1330, H1343, S1346, G1347, T1348, D1367, and Q1368. The disordered stretch occupies residues 1450–1512; sequence YKRHHPVPSG…NNSPSQNSSN (63 aa). The segment covering 1467 to 1493 has biased composition (acidic residues); sequence TDSDDYDDDEDDDESDKDDEEEEEENS. Positions 1501–1512 are enriched in polar residues; that stretch reads GVNNSPSQNSSN.

It belongs to the glycosyltransferase 28 family.

It localises to the cytoplasm. It is found in the membrane. The enzyme catalyses a sterol + UDP-alpha-D-glucose = a sterol 3-beta-D-glucoside + UDP + H(+). The catalysed reaction is ergosterol + UDP-alpha-D-glucose = ergosteryl 3-beta-D-glucoside + UDP + H(+). Its function is as follows. Sterol glycosyltransferase responsible for the glycosylation of ergosterol to form ergosterol-glucoside. This chain is Sterol 3-beta-glucosyltransferase, found in Candida albicans (strain SC5314 / ATCC MYA-2876) (Yeast).